Reading from the N-terminus, the 141-residue chain is Nucleoside triphosphatase NudI (141 aa).

Residues 1–141 (MRQRTIVCPL…RHTLALKGLL (141 aa)) enclose the Nudix hydrolase domain. Positions 38–59 (GGVEPGERIEEALRREIREELG) match the Nudix box motif.

This sequence belongs to the Nudix hydrolase family. NudI subfamily. As to quaternary structure, monomer. Mg(2+) is required as a cofactor.

The catalysed reaction is a ribonucleoside 5'-triphosphate + H2O = a ribonucleoside 5'-phosphate + diphosphate + H(+). It carries out the reaction a 2'-deoxyribonucleoside 5'-triphosphate + H2O = a 2'-deoxyribonucleoside 5'-phosphate + diphosphate + H(+). The enzyme catalyses dUTP + H2O = dUMP + diphosphate + H(+). It catalyses the reaction dTTP + H2O = dTMP + diphosphate + H(+). The catalysed reaction is dCTP + H2O = dCMP + diphosphate + H(+). Catalyzes the hydrolysis of nucleoside triphosphates, with a preference for pyrimidine deoxynucleoside triphosphates (dUTP, dTTP and dCTP). The protein is Nucleoside triphosphatase NudI of Salmonella heidelberg (strain SL476).